We begin with the raw amino-acid sequence, 237 residues long: Glucosamine-6-phosphate deaminase (237 aa).

Asp67 (proton acceptor; for enolization step) is an active-site residue. Residue Asn136 is the For ring-opening step of the active site. Catalysis depends on His138, which acts as the Proton acceptor; for ring-opening step. The active-site For ring-opening step is the Glu143.

It belongs to the glucosamine/galactosamine-6-phosphate isomerase family. NagB subfamily.

It catalyses the reaction alpha-D-glucosamine 6-phosphate + H2O = beta-D-fructose 6-phosphate + NH4(+). It functions in the pathway amino-sugar metabolism; N-acetylneuraminate degradation; D-fructose 6-phosphate from N-acetylneuraminate: step 5/5. In terms of biological role, catalyzes the reversible isomerization-deamination of glucosamine 6-phosphate (GlcN6P) to form fructose 6-phosphate (Fru6P) and ammonium ion. This Lysinibacillus sphaericus (strain C3-41) protein is Glucosamine-6-phosphate deaminase.